Consider the following 323-residue polypeptide: Putative divalent cation/proton antiporter TMEM165 (323 aa).

The first 33 residues, 1–33 (MAAAARGSGRAPTRRLLVLLLLQLLWAPAGVRA), serve as a signal peptide directing secretion. The Lumenal segment spans residues 34-89 (GPEEDLSHRNQEPPAPAQQLQPQPAAVQGLEPARAEKGLTPVAPVHTNKEDAAAQT). Over residues 35-44 (PEEDLSHRNQ) the composition is skewed to basic and acidic residues. Residues 35-60 (PEEDLSHRNQEPPAPAQQLQPQPAAV) are disordered. Residues 50-59 (AQQLQPQPAA) show a composition bias toward low complexity. A helical membrane pass occupies residues 90–110 (NLGFIHAFVAAISVIIVSELG). Residues 111-126 (DKTFFIAAIMAMRYNR) lie on the Cytoplasmic side of the membrane. Residues 127–147 (LTVLAGAMLALALMTCLSVLF) form a helical membrane-spanning segment. At 148–151 (GYAT) the chain is on the lumenal side. Residues 152 to 172 (TVIPRVYTYYVSTALFAIFGI) form a helical membrane-spanning segment. The Cytoplasmic segment spans residues 173-227 (RMLREGLKMSPDEGQEELEEVQAELKKKDEEFQRTKLLNGPDVETGTSTAIPQKK). Positions 184-211 (DEGQEELEEVQAELKKKDEEFQRTKLLN) form a coiled coil. A helical transmembrane segment spans residues 228–248 (WLHFISPIFVQALTLTFLAEW). Topologically, residues 249–266 (GDRSQLTTIVLAAREDPY) are lumenal. The chain crosses the membrane as a helical span at residues 267–287 (GVAVGGTVGHCLCTGLAVIGG). The Cytoplasmic segment spans residues 288–298 (RMIAQKISVRT). A helical transmembrane segment spans residues 299–319 (VTIIGGIVFLAFAFSALFISP). The Lumenal segment spans residues 320–323 (ESGF).

Belongs to the GDT1 family. In terms of tissue distribution, expressed in mammary epithelial cells (at protein level).

Its subcellular location is the golgi apparatus membrane. The enzyme catalyses Ca(2+)(in) + n H(+)(out) = Ca(2+)(out) + n H(+)(in). It catalyses the reaction Mn(2+)(in) + n H(+)(out) = Mn(2+)(out) + n H(+)(in). In terms of biological role, putative divalent cation:proton antiporter that exchanges calcium or manganese ions for protons across the Golgi membrane. Mediates the reversible transport of calcium or manganese to the Golgi lumen driven by the proton gradient and possibly the membrane potential generated by V-ATPase. Provides calcium or manganese cofactors to resident Golgi enzymes and contributes to the maintenance of an acidic luminal Golgi pH required for proper functioning of the secretory pathway. Promotes Ca(2+) storage within the Golgi lumen of the mammary epithelial cells to be then secreted into milk. The transport mechanism and stoichiometry remains to be elucidated. The protein is Putative divalent cation/proton antiporter TMEM165 of Mus musculus (Mouse).